The sequence spans 138 residues: Putative pre-16S rRNA nuclease (138 aa).

It belongs to the YqgF nuclease family.

Its subcellular location is the cytoplasm. Its function is as follows. Could be a nuclease involved in processing of the 5'-end of pre-16S rRNA. This is Putative pre-16S rRNA nuclease from Caldicellulosiruptor bescii (strain ATCC BAA-1888 / DSM 6725 / KCTC 15123 / Z-1320) (Anaerocellum thermophilum).